Here is a 732-residue protein sequence, read N- to C-terminus: Prolyl 3-hydroxylase 3 (732 aa).

A signal peptide spans 1-19 (MLRLLRLLLLLLLPPPGSP). The segment covering 15 to 25 (PPGSPEPPEPP) has biased composition (pro residues). Residues 15–35 (PPGSPEPPEPPGLAQLSPGSP) are disordered. TPR repeat units follow at residues 39 to 72 (PDLL…RAAL), 152 to 185 (REPY…NPTH), 214 to 247 (YWAA…SLAH), and 312 to 345 (LSQL…YPED). Asn-327 and Asn-458 each carry an N-linked (GlcNAc...) asparagine glycan. The Fe2OG dioxygenase domain occupies 557 to 671 (THLVCRSAIE…RCALALWHTW (115 aa)). Positions 580, 582, and 652 each coordinate Fe cation. The active site involves Arg-662. Positions 674-703 (EHSEQEWTEAKELLQEEEEEEEEEDILSRD) form a coiled coil. Residues 676–687 (SEQEWTEAKELL) are compositionally biased toward basic and acidic residues. The tract at residues 676-732 (SEQEWTEAKELLQEEEEEEEEEDILSRDPSPEPPSHKLQRVQEKAGKPRRVRVREEL) is disordered. Residues 688–698 (QEEEEEEEEED) are compositionally biased toward acidic residues. A compositionally biased stretch (basic residues) spans 722–732 (KPRRVRVREEL). Residues 729–732 (REEL) carry the Prevents secretion from ER motif.

It belongs to the leprecan family. In terms of assembly, identified in a complex with PLOD1 and P3H4. It depends on Fe cation as a cofactor. L-ascorbate is required as a cofactor. Detected in kidney (at protein level).

It localises to the endoplasmic reticulum. The catalysed reaction is L-prolyl-[collagen] + 2-oxoglutarate + O2 = trans-3-hydroxy-L-prolyl-[collagen] + succinate + CO2. Functionally, part of a complex composed of PLOD1, P3H3 and P3H4 that catalyzes hydroxylation of lysine residues in collagen alpha chains and is required for normal assembly and cross-linkling of collagen fibrils. Required for normal hydroxylation of lysine residues in type I collagen chains in skin, bone, tendon, aorta and cornea. Required for normal skin stability via its role in hydroxylation of lysine residues in collagen alpha chains and in collagen fibril assembly. Apparently not required for normal prolyl 3-hydroxylation on collagen chains, possibly because it functions redundantly with other prolyl 3-hydroxylases. The sequence is that of Prolyl 3-hydroxylase 3 from Mus musculus (Mouse).